We begin with the raw amino-acid sequence, 518 residues long: MQNLPKWKIVLSIICTVFAIICALPNFIQINSKFLPHDSINLGLDLRGGANLLLDVDFDTYLNDSMENLADTLRKNLRKHKIGYKNLLVRHNNIQLEVRSPEVLKSLKKIINKIDPEIIIGVNKNKIKLRYSESRFNDLLNKVVEQSIEIVRMRVDSTGTKEPTLQRQGNKHILLQVPGSENPSYLKNILGKTAKLTFHLVDENANIEDAIKGHVPLGSMLIKGDSKHHGEYYIVIKKKVLLSGAHLTKASASFDQNSQPIVAFSFNNLGSKIFGEITKNNTGKRLAIVLDNKLLSAPIINGAIIGGNGIITGNFTIESANELALLLRVGSLPTPLKIIEERSIGPNLGADSIESGKKAGLIGFVAVCIFMILSYGVIGLFANIALILALLYILALLSLFQATLTLPGIAGIILTIGMAVDANVLIYERIKEELHKGVSNLYAIRTGFESAFATIIDSNITTLIVAFALYIFGVGAIKGFAVALTIGIISSMFSAIIITKLLIDVWVKYFKPKKLGLL.

The next 6 membrane-spanning stretches (helical) occupy residues 9-29 (IVLS…NFIQ), 356-376 (GKKA…LSYG), 377-397 (VIGL…LALL), 406-426 (LPGI…NVLI), 463-483 (LIVA…FAVA), and 486-506 (IGII…IDVW).

Belongs to the SecD/SecF family. SecD subfamily. Forms a complex with SecF. Part of the essential Sec protein translocation apparatus which comprises SecA, SecYEG and auxiliary proteins SecDF-YajC and YidC.

It localises to the cell inner membrane. Part of the Sec protein translocase complex. Interacts with the SecYEG preprotein conducting channel. SecDF uses the proton motive force (PMF) to complete protein translocation after the ATP-dependent function of SecA. The sequence is that of Protein translocase subunit SecD from Rickettsia prowazekii (strain Madrid E).